The sequence spans 223 residues: Endonuclease NucS (223 aa).

The protein belongs to the NucS endonuclease family.

The protein localises to the cytoplasm. Its function is as follows. Cleaves both 3' and 5' ssDNA extremities of branched DNA structures. This is Endonuclease NucS from Mycolicibacterium vanbaalenii (strain DSM 7251 / JCM 13017 / BCRC 16820 / KCTC 9966 / NRRL B-24157 / PYR-1) (Mycobacterium vanbaalenii).